Here is a 253-residue protein sequence, read N- to C-terminus: uncharacterized protein (253 aa).

A signal peptide spans 1 to 15 (MNRVILFHFHFFKNA).

This is an uncharacterized protein from Archaeoglobus fulgidus (strain ATCC 49558 / DSM 4304 / JCM 9628 / NBRC 100126 / VC-16).